A 467-amino-acid polypeptide reads, in one-letter code: Methionine aminopeptidase 2-1 (467 aa).

Basic and acidic residues predominate over residues 1 to 10 (MGSKSPDGHR). Residues 1-105 (MGSKSPDGHR…TPPRVSLPSI (105 aa)) form a disordered region. Residues 43 to 55 (DGDDEDEDGDDDG) show a composition bias toward acidic residues. Over residues 75–90 (KKRKRKSNKKKKKKTS) the composition is skewed to basic residues. His-219 is a substrate binding site. A divalent metal cation is bound by residues Asp-240, Asp-251, and His-320. A substrate-binding site is contributed by His-328. A divalent metal cation-binding residues include Glu-353 and Glu-448.

The protein belongs to the peptidase M24A family. Methionine aminopeptidase eukaryotic type 2 subfamily. Co(2+) is required as a cofactor. Requires Zn(2+) as cofactor. The cofactor is Mn(2+). Fe(2+) serves as cofactor.

The protein localises to the cytoplasm. It carries out the reaction Release of N-terminal amino acids, preferentially methionine, from peptides and arylamides.. Functionally, cotranslationally removes the N-terminal methionine from nascent proteins. The N-terminal methionine is often cleaved when the second residue in the primary sequence is small and uncharged (Met-Ala-, Cys, Gly, Pro, Ser, Thr, or Val). In Arthroderma gypseum (strain ATCC MYA-4604 / CBS 118893) (Microsporum gypseum), this protein is Methionine aminopeptidase 2-1.